An 87-amino-acid chain; its full sequence is Class II metallothionein-like protein 1A (87 aa).

The protein belongs to the metallothionein superfamily. Type 15 family. Expressed in developing seeds.

Functionally, metallothioneins have a high content of cysteine residues that bind various heavy metals. This Oryza sativa subsp. japonica (Rice) protein is Class II metallothionein-like protein 1A (MT21A).